A 244-amino-acid polypeptide reads, in one-letter code: Lytic polysaccharide monooxygenase-like protein ANIA_04702 (244 aa).

The signal sequence occupies residues methionine 1–alanine 23. Residue histidine 24 participates in Cu(2+) binding. Position 24 is a methylhistidine (histidine 24). Residues asparagine 57, asparagine 80, asparagine 118, asparagine 159, asparagine 192, and asparagine 198 are each glycosylated (N-linked (GlcNAc...) asparagine). Disulfide bonds link cysteine 72-cysteine 177 and cysteine 142-cysteine 196. Asparagine 215 carries GPI-anchor amidated asparagine lipidation. Residues alanine 216 to alanine 244 constitute a propeptide, removed in mature form.

This sequence belongs to the X325 family. It depends on Cu(2+) as a cofactor. Post-translationally, the catalytically essential N-terminal histidine His-24 is post-translationally modified by methylation to prevent protonation of the histidine side chain, and protect the critical active site of the enzyme from oxidative damage.

It is found in the cell membrane. In terms of biological role, lytic polysaccharide monooxygenase-like protein that has diverged to biological functions other than polysaccharide degradation since it does not perform oxidative cleavage of polysaccharides. Acts as a cell surface-bound protein that functions in the copper-accumulation pathway. May also act as the major cell wall sensor that regulates MAP kinase-dependent hyphal anastomosis, the fusion of hyphal cells. The protein is Lytic polysaccharide monooxygenase-like protein ANIA_04702 of Emericella nidulans (strain FGSC A4 / ATCC 38163 / CBS 112.46 / NRRL 194 / M139) (Aspergillus nidulans).